The primary structure comprises 363 residues: MSGYGLPISQEVAKELAENARKIAAPGKGILAADESTGTIKKRFDSIGVENTEANRAFYRDLLFSTKGLGQYISGAILFEETLYQKSPSGVPMVDLLKAEGIIPGIKVDKGLETLPLTDDEKATMGLDGLSERCKKYYEAGARFAKWRAVLSIDPAKGKPTNLSITEVAHGLARYAAICQANRLVPIVEPEILTDGSHDITVCAEVTERVLAAVFKALNDHHVLLEGALLKPNMVTHGSDCPKPASHEEIAFYTVRSLKRTVPPALPGVMFLSGGQSEEDASLNLNEMNKMGPHPFQLSFSYGRALQASCLKAWKGVPENKAKAQQVLMERARANGEAQLGKYGGGAGGALAASSLFEKRYVY.

D34 provides a ligand contact to dihydroxyacetone phosphate. 2 residues coordinate D-glyceraldehyde 3-phosphate: S36 and T39. R43 is a binding site for beta-D-fructose 1,6-bisphosphate. K107 contacts D-glyceraldehyde 3-phosphate. K146 is a binding site for dihydroxyacetone phosphate. E189 contacts D-glyceraldehyde 3-phosphate. Catalysis depends on E189, which acts as the Proton acceptor. 3 residues coordinate dihydroxyacetone phosphate: K231, S273, and G274. Residue K231 is the Schiff-base intermediate with dihydroxyacetone phosphate of the active site. Beta-D-fructose 1,6-bisphosphate contacts are provided by residues 273 to 275 (SGG) and S301. Dihydroxyacetone phosphate-binding residues include G303 and R304. Beta-D-fructose 1,6-bisphosphate is bound at residue R304.

Belongs to the class I fructose-bisphosphate aldolase family. As to quaternary structure, homotetramer. Component of a complex, at least composed of ald-1, microneme protein MIC2 and ACT1. Interacts with microneme protein MIC2 (via cytoplasmic tail). Interacts with ACT1 (F-actin).

The protein localises to the cytoplasm. The catalysed reaction is beta-D-fructose 1,6-bisphosphate = D-glyceraldehyde 3-phosphate + dihydroxyacetone phosphate. It participates in carbohydrate degradation; glycolysis; D-glyceraldehyde 3-phosphate and glycerone phosphate from D-glucose: step 4/4. Plays a key role in glycolysis by catalyzing the cleavage of fructose 1,6-bisphosphate into dihydroxyacetone phosphate and glyceraldehyde 3-phosphate. Forms a bridge between cell surface adhesins and the actin cytoskeleton. Required for parasite invasion of host cells. In Toxoplasma gondii, this protein is Fructose-bisphosphate aldolase 1.